A 610-amino-acid chain; its full sequence is MSEIFDAKAFLKTVTSQPGVYRMYDAGGTVIYVGKAKDLKKRLSSYFRSNLASRKTEALVAQIQHIDVTVTHTETEALLLEHNYIKLYQPRYNVLLRDDKSYPFIFLSGDTHPRLSMHRGAKHAKGEYFGPFPNGYAVRETLALLQKIFPIRQCENSVYRNRSRPCLQYQIGRCLGPCVAGLVSEEEYTQQVEYVRLFLSGKDDQVLTQLIARMEKASQDLAFEEAARIRDQIQAVRRVTEKQFVSNAGDDLDVIGVAFDAGMACVHVLFIRQGKVLGSRSYFPKVPGGTELGEVVETFVGQFYLQGSQMRTLPGEILLDFNLSDKTLLADSLSELAGRRIHVQTKPRGDRARYLKLARTNAATALITKLSQQSTITQRLTALAAVLKLPAIKRMECFDISHTMGEQTVASCVVFDANGPLRAEYRRYNIAGITPGDDYAAMNQVLRRRYGKAIEESKIPDVILIDGGKGQLAQAKAVFAELDVPWDKHRPLLLGVAKGADRKAGLETLFFEPEGEGFSLPPDSPALHVIQHIRDESHDHAIGGHRKKRAKVKNTSTLETIEGVGPKRRQMLLKYMGGLQGLRNASVEEIAKVPGISQGLAEKIFWSLKH.

The region spanning serine 16–valine 94 is the GIY-YIG domain. In terms of domain architecture, UVR spans aspartate 204 to valine 239.

Belongs to the UvrC family. Interacts with UvrB in an incision complex.

The protein resides in the cytoplasm. In terms of biological role, the UvrABC repair system catalyzes the recognition and processing of DNA lesions. UvrC both incises the 5' and 3' sides of the lesion. The N-terminal half is responsible for the 3' incision and the C-terminal half is responsible for the 5' incision. This chain is UvrABC system protein C, found in Salmonella paratyphi B (strain ATCC BAA-1250 / SPB7).